We begin with the raw amino-acid sequence, 225 residues long: UPF0758 protein Vapar_4033 (225 aa).

In terms of domain architecture, MPN spans 103-225 (VFDSPGTVKQ…SYSMAEKGLL (123 aa)). Residues His174, His176, and Asp187 each coordinate Zn(2+). Residues 174–187 (HNHPSGSIEPSRAD) carry the JAMM motif motif.

This sequence belongs to the UPF0758 family.

This is UPF0758 protein Vapar_4033 from Variovorax paradoxus (strain S110).